Reading from the N-terminus, the 301-residue chain is MEQLVESLRALQVGEVRVNESLAHHTTWKIGGPADVFVIPNDIEGLKNTMKLIQETGCKWRVIGRGSNILVSDKGLRGVTIKLDKGLDHLEVNGESITVGAGFPVVKLATVISRQGLAGLEFAAGIPGSVGGAVFMNAGAHGSDISQILTKAHVLFPDGTLRWLTNEEMAFSYRTSLLQKNDGICVEAIFSLTRGDKEDIKKKLQKNKDYRRDTQPWNHPTCGSVFRNPLPEYAGQLIEKAGLKGYQIGGAQISTMHANFIVNTGDAKAADVLALIHHVKDTIQKQYQMNMETEVELIGER.

Residues 29–195 enclose the FAD-binding PCMH-type domain; that stretch reads KIGGPADVFV…VEAIFSLTRG (167 aa). The active site involves Arg-174. Ser-224 (proton donor) is an active-site residue. Glu-294 is an active-site residue.

Belongs to the MurB family. FAD is required as a cofactor.

It is found in the cytoplasm. The catalysed reaction is UDP-N-acetyl-alpha-D-muramate + NADP(+) = UDP-N-acetyl-3-O-(1-carboxyvinyl)-alpha-D-glucosamine + NADPH + H(+). It functions in the pathway cell wall biogenesis; peptidoglycan biosynthesis. Its function is as follows. Cell wall formation. This chain is UDP-N-acetylenolpyruvoylglucosamine reductase, found in Halalkalibacterium halodurans (strain ATCC BAA-125 / DSM 18197 / FERM 7344 / JCM 9153 / C-125) (Bacillus halodurans).